The primary structure comprises 119 residues: uncharacterized protein (119 aa).

Residues 1–29 (MKKVGEEEIKQEENEKEKIVKKLNESDVK) are a coiled coil.

This is an uncharacterized protein from Acidianus sp. F28 (AFV-2).